The sequence spans 396 residues: Methylthioribose kinase (396 aa).

ATP is bound by residues N44, K61, and 115 to 117; that span reads EDL. Substrate is bound at residue D233. Residue 250-252 coordinates ATP; the sequence is DPE. R340 is a substrate binding site.

The protein belongs to the methylthioribose kinase family. Homodimer.

The enzyme catalyses 5-(methylsulfanyl)-D-ribose + ATP = 5-(methylsulfanyl)-alpha-D-ribose 1-phosphate + ADP + H(+). The protein operates within amino-acid biosynthesis; L-methionine biosynthesis via salvage pathway; S-methyl-5-thio-alpha-D-ribose 1-phosphate from S-methyl-5'-thioadenosine (hydrolase route): step 2/2. Its function is as follows. Catalyzes the phosphorylation of methylthioribose into methylthioribose-1-phosphate. The polypeptide is Methylthioribose kinase (Geobacillus thermodenitrificans (strain NG80-2)).